The primary structure comprises 549 residues: Glucose-6-phosphate isomerase (549 aa).

Glutamate 355 acts as the Proton donor in catalysis. Catalysis depends on residues histidine 387 and lysine 515.

Belongs to the GPI family.

It is found in the cytoplasm. The enzyme catalyses alpha-D-glucose 6-phosphate = beta-D-fructose 6-phosphate. Its pathway is carbohydrate biosynthesis; gluconeogenesis. It participates in carbohydrate degradation; glycolysis; D-glyceraldehyde 3-phosphate and glycerone phosphate from D-glucose: step 2/4. Catalyzes the reversible isomerization of glucose-6-phosphate to fructose-6-phosphate. This is Glucose-6-phosphate isomerase from Histophilus somni (strain 2336) (Haemophilus somnus).